A 434-amino-acid polypeptide reads, in one-letter code: Protein maelstrom homolog (434 aa).

Residues 4 to 73 (RKASRNAYYF…AQGKDSGPSE (70 aa)) constitute a DNA-binding region (HMG box). 2 disordered regions span residues 62 to 94 (RAAQ…KQNV) and 357 to 385 (SHFN…SGQN). Polar residues predominate over residues 357-371 (SHFNSANQEQRSNTP).

This sequence belongs to the maelstrom family. As to quaternary structure, interacts with SMARCB1, SIN3B and DDX4. Interacts with piRNA-associated proteins TDRD1, PIWIL1 and PIWIL2. Interacts with TEX19.

It is found in the cytoplasm. The protein resides in the nucleus. Functionally, plays a central role during spermatogenesis by repressing transposable elements and preventing their mobilization, which is essential for the germline integrity. Acts via the piRNA metabolic process, which mediates the repression of transposable elements during meiosis by forming complexes composed of piRNAs and Piwi proteins and governs the methylation and subsequent repression of transposons. Its association with piP-bodies suggests a participation in the secondary piRNAs metabolic process. Required for the localization of germ-cell factors to the meiotic nuage. The chain is Protein maelstrom homolog (MAEL) from Macaca fascicularis (Crab-eating macaque).